Here is a 270-residue protein sequence, read N- to C-terminus: 3-phenylpropionate-dihydrodiol/cinnamic acid-dihydrodiol dehydrogenase (270 aa).

10–34 (FITGGGSGLGLALVERFIEEGAQVA) is an NAD(+) binding site. Ser143 provides a ligand contact to substrate. Tyr156 functions as the Proton acceptor in the catalytic mechanism.

The protein belongs to the short-chain dehydrogenases/reductases (SDR) family.

The catalysed reaction is 3-(cis-5,6-dihydroxycyclohexa-1,3-dien-1-yl)propanoate + NAD(+) = 3-(2,3-dihydroxyphenyl)propanoate + NADH + H(+). The enzyme catalyses (2E)-3-(cis-5,6-dihydroxycyclohexa-1,3-dien-1-yl)prop-2-enoate + NAD(+) = (2E)-3-(2,3-dihydroxyphenyl)prop-2-enoate + NADH + H(+). It participates in aromatic compound metabolism; 3-phenylpropanoate degradation. In terms of biological role, converts 3-phenylpropionate-dihydrodiol (PP-dihydrodiol) and cinnamic acid-dihydrodiol (CI-dihydrodiol) into 3-(2,3-dihydroxylphenyl)propanoic acid (DHPP) and 2,3-dihydroxicinnamic acid (DHCI), respectively. This Escherichia coli (strain SMS-3-5 / SECEC) protein is 3-phenylpropionate-dihydrodiol/cinnamic acid-dihydrodiol dehydrogenase.